Reading from the N-terminus, the 639-residue chain is Protein phosphatase EYA4 (639 aa).

Position 1 is an N-acetylmethionine (M1). Disordered stretches follow at residues 1 to 72 (MEDS…GGEN), 210 to 232 (QTQSPLQSGCLSYSPGFSTPQPG), and 300 to 368 (ADGT…DSDL). Residue K14 forms a Glycyl lysine isopeptide (Lys-Gly) (interchain with G-Cter in SUMO2) linkage. Positions 18–30 (ESDVSQSQNSRSM) are enriched in polar residues. A Glycyl lysine isopeptide (Lys-Gly) (interchain with G-Cter in SUMO2) cross-link involves residue K52. Residues 56 to 66 (SNLSSTSVTTN) show a composition bias toward low complexity. Residues 300-334 (ADGTPSSTSTYQLQESLPGLTNQPGEFDTMQSPST) show a composition bias toward polar residues. Position 361 is a phosphoserine (S361). The active-site Nucleophile is D375. 3 residues coordinate Mg(2+): D375, D377, and D603. D377 serves as the catalytic Proton donor.

This sequence belongs to the HAD-like hydrolase superfamily. EYA family. In terms of assembly, interacts with SIX3; translocates EYA4 from the cytoplasm to the nucleus and promotes activation of their target genes. It depends on Mg(2+) as a cofactor. Highly expressed in heart and skeletal muscle.

It localises to the cytoplasm. It is found in the nucleus. The catalysed reaction is O-phospho-L-tyrosyl-[protein] + H2O = L-tyrosyl-[protein] + phosphate. In terms of biological role, tyrosine phosphatase that specifically dephosphorylates 'Tyr-142' of histone H2AX (H2AXY142ph). 'Tyr-142' phosphorylation of histone H2AX plays a central role in DNA repair and acts as a mark that distinguishes between apoptotic and repair responses to genotoxic stress. Promotes efficient DNA repair by dephosphorylating H2AX, promoting the recruitment of DNA repair complexes containing MDC1. Its function as histone phosphatase probably explains its role in transcription regulation during organogenesis. May be involved in development of the eye. The protein is Protein phosphatase EYA4 (EYA4) of Homo sapiens (Human).